Consider the following 138-residue polypeptide: Holo-[acyl-carrier-protein] synthase (138 aa).

Positions 11 and 65 each coordinate Mg(2+).

The protein belongs to the P-Pant transferase superfamily. AcpS family. It depends on Mg(2+) as a cofactor.

The protein resides in the cytoplasm. It carries out the reaction apo-[ACP] + CoA = holo-[ACP] + adenosine 3',5'-bisphosphate + H(+). Its function is as follows. Transfers the 4'-phosphopantetheine moiety from coenzyme A to a Ser of acyl-carrier-protein. The chain is Holo-[acyl-carrier-protein] synthase from Ralstonia nicotianae (strain ATCC BAA-1114 / GMI1000) (Ralstonia solanacearum).